A 146-amino-acid chain; its full sequence is Gene 19.2 protein (146 aa).

In Escherichia coli (Bacteriophage T3), this protein is Gene 19.2 protein (19.2).